The sequence spans 335 residues: Putative hydrogenase expression/formation protein MJ0676 (335 aa).

It belongs to the HypE family.

The sequence is that of Putative hydrogenase expression/formation protein MJ0676 from Methanocaldococcus jannaschii (strain ATCC 43067 / DSM 2661 / JAL-1 / JCM 10045 / NBRC 100440) (Methanococcus jannaschii).